Reading from the N-terminus, the 63-residue chain is Cecropin (63 aa).

Positions 1–23 (MNFYKIFVFIALILALSVSQSEA) are cleaved as a signal peptide. Arginine 62 bears the Arginine amide mark.

Monomer. As to expression, hemolymph.

Its subcellular location is the secreted. Its function is as follows. Cecropins have lytic and antibacterial activity against several Gram-negative bacteria. The protein is Cecropin of Glossina morsitans morsitans (Savannah tsetse fly).